A 934-amino-acid polypeptide reads, in one-letter code: uncharacterized protein (934 aa).

The N-terminal stretch at 1–24 is a signal peptide; sequence MKLKKRYLLLGSTLTVSAALILSA. Cys25 carries the N-palmitoyl cysteine lipid modification. A lipid anchor (S-diacylglycerol cysteine) is attached at Cys25. Residues 111–131 form a disordered region; the sequence is SGLKGRAQKNGSTDSSDGSSK. The span at 119–131 shows a compositional bias: polar residues; that stretch reads KNGSTDSSDGSSK.

The protein localises to the cell membrane. This is an uncharacterized protein from Mycoplasma genitalium (strain ATCC 33530 / DSM 19775 / NCTC 10195 / G37) (Mycoplasmoides genitalium).